Consider the following 263-residue polypeptide: Aquaporin Lacbi1:233199 (263 aa).

Topologically, residues 1–17 are cytoplasmic; the sequence is MFTLAHHRHAIRKPMAE. The helical transmembrane segment at 18–38 threads the bilayer; the sequence is FFGVALLVIFGAGAACQVVLS. At 39–44 the chain is on the extracellular side; that stretch reads TNPNSF. Residues 45 to 65 form a helical membrane-spanning segment; that stretch reads LSINFGWAIGIAMGAWISGSI. Residues 66–88 are Cytoplasmic-facing; that stretch reads SGGHINPAITIAMATYRGFPWRE. The short motif at 71-73 is the NPA 1 element; that stretch reads NPA. Residues 89–109 traverse the membrane as a helical segment; sequence VPSYILAQVLGGVVGAALVYA. Residues 110–143 lie on the Extracellular side of the membrane; it reads NYIHAIDVFEGGRHIRTQATASLFATYALPYMTQ. Residues 144 to 164 form a helical membrane-spanning segment; it reads VSCFFSEFLATAVLAMMVLAL. Residues 165 to 174 lie on the Cytoplasmic side of the membrane; the sequence is TDNRNGAPTN. A helical membrane pass occupies residues 175–195; the sequence is GLSPFALFVLFIGLGASLGME. Topologically, residues 196–227 are extracellular; the sequence is TAYALNPARDFGPRLFLAMAGYGKALFNYRSQ. The NPA 2 signature appears at 201 to 203; that stretch reads NPA. The chain crosses the membrane as a helical span at residues 228–248; that stretch reads YWLWAPIIAPVLGAQAGGLLY. Over 249-263 the chain is Cytoplasmic; the sequence is DTFLYDGDDSPIKWR.

This sequence belongs to the MIP/aquaporin (TC 1.A.8) family.

Its subcellular location is the membrane. It carries out the reaction H2O(in) = H2O(out). Probable water channel required to facilitate the transport of water across membranes. The chain is Aquaporin Lacbi1:233199 from Laccaria bicolor (strain S238N-H82 / ATCC MYA-4686) (Bicoloured deceiver).